The following is a 610-amino-acid chain: Phosphoprotein 85 (610 aa).

Disordered stretches follow at residues 462 to 530 and 543 to 610; these read NEGR…NISD and EEPM…DARL. Residues 467–478 are compositionally biased toward low complexity; it reads SSRASPSHSTST. Over residues 484-495 the composition is skewed to polar residues; the sequence is PQSDRSTPTSIL. Low complexity-rich tracts occupy residues 503 to 515 and 552 to 567; these read SNSRSSSVSFSQE and SPQSTSSNNSMSRQSR. The span at 581–592 shows a compositional bias: polar residues; the sequence is VPSSQTRRQNNA. Positions 600–610 are enriched in basic and acidic residues; the sequence is RLTEMMNDARL.

It belongs to the herpesviridae pp85 family. In terms of processing, phosphorylated.

The protein resides in the virion tegument. Its subcellular location is the host cytoplasm. This Homo sapiens (Human) protein is Phosphoprotein 85 (U14).